A 215-amino-acid polypeptide reads, in one-letter code: Large ribosomal subunit protein uL1 (215 aa).

Belongs to the universal ribosomal protein uL1 family. In terms of assembly, part of the 50S ribosomal subunit.

Functionally, binds directly to 23S rRNA. Probably involved in E site tRNA release. Its function is as follows. Protein L1 is also a translational repressor protein, it controls the translation of its operon by binding to its mRNA. The sequence is that of Large ribosomal subunit protein uL1 from Methanospirillum hungatei JF-1 (strain ATCC 27890 / DSM 864 / NBRC 100397 / JF-1).